The sequence spans 240 residues: Protein MGARP (240 aa).

Topologically, residues 1-45 (MYLRRAVSKTLALPLRAPPGPAPLRKDASLRWISSNKFPGSSGSN) are cytoplasmic. Residues 46–64 (MIYYLVVGVTVSAGGYYTY) form a helical; Anchor for type IV membrane protein membrane-spanning segment. Topologically, residues 65–240 (KRVTSGKAKR…AGSEAASAQG (176 aa)) are mitochondrial intermembrane. Positions 72–240 (AKRSDHVTDL…AGSEAASAQG (169 aa)) are disordered. Positions 73–87 (KRSDHVTDLKEKTKA) are enriched in basic and acidic residues. Low complexity-rich tracts occupy residues 166-183 (TVET…VTST) and 228-240 (EACA…SAQG).

Interacts with RHOT1/Miro-1, RHOT2/Miro-2, TRAK1/OIP106 and TRAK2/GRIF1.

It is found in the mitochondrion. Its subcellular location is the mitochondrion outer membrane. The protein localises to the mitochondrion inner membrane. Its function is as follows. Plays a role in the trafficking of mitochondria along microtubules. Regulates the kinesin-mediated axonal transport of mitochondria to nerve terminals along microtubules during hypoxia. Participates in the translocation of TRAK2/GRIF1 from the cytoplasm to the mitochondrion. Also plays a role in steroidogenesis through maintenance of mitochondrial abundance and morphology. Plays an inhibitory role during neocortex development by regulating mitochondrial morphology, distribution and motility in neocortical neurons. The protein is Protein MGARP (MGARP) of Bos taurus (Bovine).